Here is a 178-residue protein sequence, read N- to C-terminus: MSRIGYKVVNLPEGVEVKQDGNVVTVKGPKGELTREFSDKITIKVEGNEVSFERSAEDNKTKALHGTTRSNFHNMVVGVSEGFKKELELRGVGYRAQMKGKTLVLNVGYSHPVEFEEEEGITFETPSATSIIVSGINKEEVGDCAARIRATRAPEPYKGKGIRYVGEYVRRKEGKTGK.

The protein belongs to the universal ribosomal protein uL6 family. In terms of assembly, part of the 50S ribosomal subunit.

This protein binds to the 23S rRNA, and is important in its secondary structure. It is located near the subunit interface in the base of the L7/L12 stalk, and near the tRNA binding site of the peptidyltransferase center. This is Large ribosomal subunit protein uL6 from Ligilactobacillus salivarius (strain UCC118) (Lactobacillus salivarius).